The following is a 328-amino-acid chain: D-cysteine desulfhydrase (328 aa).

Lys-51 is modified (N6-(pyridoxal phosphate)lysine).

It belongs to the ACC deaminase/D-cysteine desulfhydrase family. Homodimer. Pyridoxal 5'-phosphate is required as a cofactor.

It catalyses the reaction D-cysteine + H2O = hydrogen sulfide + pyruvate + NH4(+) + H(+). Functionally, catalyzes the alpha,beta-elimination reaction of D-cysteine and of several D-cysteine derivatives. It could be a defense mechanism against D-cysteine. The chain is D-cysteine desulfhydrase from Escherichia coli O6:H1 (strain CFT073 / ATCC 700928 / UPEC).